A 134-amino-acid chain; its full sequence is Outer membrane lipoprotein RcsF (134 aa).

The N-terminal stretch at M1–G15 is a signal peptide. C16 is lipidated: N-palmitoyl cysteine. A lipid anchor (S-diacylglycerol cysteine) is attached at C16. Disordered stretches follow at residues S22–P48 and G67–A88. A compositionally biased stretch (polar residues) spans D72–P82. Intrachain disulfides connect C74/C118 and C109/C124.

It belongs to the RcsF family.

The protein resides in the cell outer membrane. Essential component of the Rcs signaling system, which controls transcription of numerous genes. Plays a role in signal transduction from the cell surface to the histidine kinase RcsC. May detect outer membrane defects. This chain is Outer membrane lipoprotein RcsF, found in Escherichia coli O6:H1 (strain CFT073 / ATCC 700928 / UPEC).